The following is a 133-amino-acid chain: Small ribosomal subunit protein uS11 (133 aa).

It belongs to the universal ribosomal protein uS11 family. Part of the 30S ribosomal subunit.

Functionally, located on the platform of the 30S subunit. In Hyperthermus butylicus (strain DSM 5456 / JCM 9403 / PLM1-5), this protein is Small ribosomal subunit protein uS11.